The following is a 335-amino-acid chain: S-adenosylmethionine:tRNA ribosyltransferase-isomerase (335 aa).

Belongs to the QueA family. As to quaternary structure, monomer.

The protein resides in the cytoplasm. The enzyme catalyses 7-aminomethyl-7-carbaguanosine(34) in tRNA + S-adenosyl-L-methionine = epoxyqueuosine(34) in tRNA + adenine + L-methionine + 2 H(+). The protein operates within tRNA modification; tRNA-queuosine biosynthesis. In terms of biological role, transfers and isomerizes the ribose moiety from AdoMet to the 7-aminomethyl group of 7-deazaguanine (preQ1-tRNA) to give epoxyqueuosine (oQ-tRNA). This Thermotoga petrophila (strain ATCC BAA-488 / DSM 13995 / JCM 10881 / RKU-1) protein is S-adenosylmethionine:tRNA ribosyltransferase-isomerase.